The following is a 237-amino-acid chain: Large ribosomal subunit protein uL1 (237 aa).

It belongs to the universal ribosomal protein uL1 family. As to quaternary structure, part of the 50S ribosomal subunit.

Functionally, binds directly to 23S rRNA. The L1 stalk is quite mobile in the ribosome, and is involved in E site tRNA release. Protein L1 is also a translational repressor protein, it controls the translation of the L11 operon by binding to its mRNA. The polypeptide is Large ribosomal subunit protein uL1 (Chloroflexus aurantiacus (strain ATCC 29364 / DSM 637 / Y-400-fl)).